The following is a 320-amino-acid chain: 3'-5' exoribonuclease YhaM (320 aa).

The segment at residues 18-90 (FLIKSATKAV…QLKIGSIRPT (73 aa)) is a DNA-binding region (OB). Residues 163 to 279 (HVVCMLNVAK…LHMIDNIDAK (117 aa)) form the HD domain.

The protein belongs to the YhaM family.

Shows a 3'-5' exoribonuclease activity. In Halalkalibacterium halodurans (strain ATCC BAA-125 / DSM 18197 / FERM 7344 / JCM 9153 / C-125) (Bacillus halodurans), this protein is 3'-5' exoribonuclease YhaM.